The primary structure comprises 336 residues: MKIAIVNDMPMAIEALRRALAFEPAHQIIWVASNGADAVQRCVEQTPDLILMDLIMPVMDGVEATRRIMAETPCAIVIVTVDREQNMRRVFEAMGHGALDVVDTPAIGGPNPKEAAAPLLRKILNIDWLIGQRVGREHVVAAPRSEPARRDRLVAIGSSAGGPAALEILLKGLPVSFPAAIVLVQHVDQVFAAGMAEWLSSASGLPVRLAKEGETPQPGVVLLAGTNHHIRLLKDGTLAYTAEPVNEVYRPSINVFFESVTRYWSGEAVGVLLTGMGRDGAQGLKAMRERGFLTIAQDQASSAVYGMPKAAAAIDAAVEIRPLPAIAPRLVEVFTQ.

Residues 2–119 enclose the Response regulatory domain; it reads KIAIVNDMPM…PNPKEAAAPL (118 aa). Position 53 is a 4-aspartylphosphate (aspartate 53). Residues 147-336 enclose the CheB-type methylesterase domain; the sequence is PARRDRLVAI…APRLVEVFTQ (190 aa). Residues serine 159, histidine 186, and aspartate 279 contribute to the active site.

The protein belongs to the CheB family. Post-translationally, phosphorylated by CheA. Phosphorylation of the N-terminal regulatory domain activates the methylesterase activity.

The protein resides in the cytoplasm. It catalyses the reaction [protein]-L-glutamate 5-O-methyl ester + H2O = L-glutamyl-[protein] + methanol + H(+). The enzyme catalyses L-glutaminyl-[protein] + H2O = L-glutamyl-[protein] + NH4(+). Functionally, involved in chemotaxis. Part of a chemotaxis signal transduction system that modulates chemotaxis in response to various stimuli. Catalyzes the demethylation of specific methylglutamate residues introduced into the chemoreceptors (methyl-accepting chemotaxis proteins or MCP) by CheR. Also mediates the irreversible deamidation of specific glutamine residues to glutamic acid. This Pseudomonas savastanoi pv. phaseolicola (strain 1448A / Race 6) (Pseudomonas syringae pv. phaseolicola (strain 1448A / Race 6)) protein is Protein-glutamate methylesterase/protein-glutamine glutaminase 3.